Consider the following 304-residue polypeptide: Calcium release-activated calcium channel protein 1 (304 aa).

Pro residues predominate over residues 1–11; sequence MHPEPAPPPSH. The tract at residues 1–50 is disordered; the sequence is MHPEPAPPPSHSNPELPVSGGSSTSGSRRSRRRSGDGEPSGAPPLPPPPP. Residues 1–89 are Cytoplasmic-facing; the sequence is MHPEPAPPPS…KLYLSRAKLK (89 aa). Positions 3 to 49 are required for generation of inwardly rectifying CRAC currents; the sequence is PEPAPPPSHSNPELPVSGGSSTSGSRRSRRRSGDGEPSGAPPLPPPP. The segment covering 12–27 has biased composition (low complexity); it reads SNPELPVSGGSSTSGS. The AKAP5 association region stretch occupies residues 39 to 61; it reads PSGAPPLPPPPPAVSYPDWIGQS. A compositionally biased stretch (pro residues) spans 41-50; sequence GAPPLPPPPP. Positions 72-92 are interaction with STIM1; the sequence is SMQALSWRKLYLSRAKLKASS. A helical transmembrane segment spans residues 90 to 107; sequence ASSRTSALLSGFAMVAMV. The Extracellular segment spans residues 108–121; that stretch reads EVQLDTDHDYPPGL. Residues 122 to 142 traverse the membrane as a helical segment; it reads LIVFSACTTVLVAVHLFALMI. Topologically, residues 143–175 are cytoplasmic; the sequence is STCILPNIEAVSNVHNLNSVKESPHERMHRHIE. Residues 176–196 form a helical membrane-spanning segment; it reads LAWAFSTVIGTLLFLAEVVLL. Topologically, residues 197 to 237 are extracellular; sequence CWVKFLPLKRQAGQPSPTKPPAESVIVANHSDSSGITPGEA. Residue Asn225 is glycosylated (N-linked (GlcNAc...) asparagine). A helical membrane pass occupies residues 238–258; the sequence is AAIASTAIMVPCGLVFIVFAV. The Cytoplasmic portion of the chain corresponds to 259–304; the sequence is HFYRSLVSHKTDRQFQELNELAEFARLQDQLDHRGDHSLTPGTHYA. The segment at 275 to 295 is interaction with STIM1; the sequence is ELNELAEFARLQDQLDHRGDH. The residue at position 298 (Thr298) is a Phosphothreonine.

It belongs to the Orai family. Oligomerizes in homomeric and heteromeric ORAI complexes. Native CRAC channels most likely consist of hexameric ORAI heteromers, implying that diverse ORAI1, ORAI2 and ORAI3 subunit combinations with distinct biophysical properties can operate in a cell-type specific way. ARC channels are heteropentamers consisting of three ORAI1 and two ORAI3 subunits. Interacts with STIM1 and STIM2; this regulates channel activity. Interacts with CALM; this may displace STIM1 and STIM2 and might thereby modulate channel activity. Interacts (via N-terminus) with AKAP5 upon store depletion. Interacts with CRACR2A/EFCAB4B; the interaction is direct and takes place in absence of Ca(2+). Forms a complex with CRACR2A/EFCAB4B and STIM1 at low concentration of Ca(2+), the complex dissociates at elevated Ca(2+) concentrations. Interacts with ASPH (isoform 8). Interacts with SLC35G1. Interacts with UBQLN1. Interacts with ADCY8; interaction is calcium store depletion independent; interaction occurs in membrane raft; interaction increases markedly after store depletion; positively regulates SOCE-induced adenylate cyclase activity; contributes to the targeting of ADCY8 to discrete regions of the plasma membrane that are shielded from other calcium events. Interacts with EFHB; the interaction takes place upon Ca(2+)-store depletion. Interacts (via N- and C-termini) with ATP2C2 (via N-terminus); this interaction regulates Ca(2+) influx at the plasma membrane. Interacts with TSPAN18; this interaction regulates ORAI1 exit from the endoplasmic (ER), and/or Golgi, and trafficking to the cell surface. Post-translationally, N-glycosylated. N-glycosylation inhibits channel activity in T cells. Ubiquitinated. In terms of processing, cys-195 is oxidated, leading to inactivation of channel activity. As to expression, expressed in lactating mammary epithelium (at protein level).

It is found in the cell membrane. Its subcellular location is the basolateral cell membrane. The catalysed reaction is Ca(2+)(in) = Ca(2+)(out). Oxidation at Cys-197 leads to inactivation of channel activity. Functionally, pore-forming subunit of two major inward rectifying Ca(2+) channels at the plasma membrane: Ca(2+) release-activated Ca(2+) (CRAC) channels and arachidonate-regulated Ca(2+)-selective (ARC) channels. Assembles with ORAI2 and ORAI3 to form hexameric CRAC channels that mediate Ca(2+) influx upon depletion of endoplasmic reticulum Ca(2+) store and channel activation by Ca(2+) sensor STIM1, a process known as store-operated Ca(2+) entry (SOCE). Various pore subunit combinations may account for distinct CRAC channel spatiotemporal and cell-type specific dynamics. ORAI1 mainly contributes to the generation of Ca(2+) plateaus involved in sustained Ca(2+) entry and is dispensable for cytosolic Ca(2+) oscillations, whereas ORAI2 and ORAI3 generate oscillatory patterns. CRAC channels assemble in Ca(2+) signaling microdomains where Ca(2+) influx is coupled to calmodulin and calcineurin signaling and activation of NFAT transcription factors recruited to ORAI1 via AKAP5. Activates NFATC2/NFAT1 and NFATC3/NFAT4-mediated transcriptional responses. CRAC channels are the main pathway for Ca(2+) influx in T cells and promote the immune response to pathogens by activating NFAT-dependent cytokine and chemokine transcription. Assembles with ORAI3 to form channels that mediate store-independent Ca(2+) influx in response to inflammatory metabolites arachidonate or its derivative leukotriene C4, termed ARC and LRC channels respectively. Plays a prominent role in Ca(2+) influx at the basolateral membrane of mammary epithelial cells independently of the Ca(2+) content of endoplasmic reticulum or Golgi stores. May mediate transepithelial transport of large quantities of Ca(2+) for milk secretion. The polypeptide is Calcium release-activated calcium channel protein 1 (Orai1) (Mus musculus (Mouse)).